The primary structure comprises 203 residues: Putative 3-methyladenine DNA glycosylase (203 aa).

The protein belongs to the DNA glycosylase MPG family.

The chain is Putative 3-methyladenine DNA glycosylase from Clostridium beijerinckii (strain ATCC 51743 / NCIMB 8052) (Clostridium acetobutylicum).